The following is a 97-amino-acid chain: Large ribosomal subunit protein eL21 (97 aa).

Belongs to the eukaryotic ribosomal protein eL21 family.

This is Large ribosomal subunit protein eL21 from Methanococcoides burtonii (strain DSM 6242 / NBRC 107633 / OCM 468 / ACE-M).